A 1303-amino-acid chain; its full sequence is DNA-directed RNA polymerase subunit beta' (1303 aa).

Positions 60, 62, 75, and 78 each coordinate Zn(2+). Asp-535, Asp-537, and Asp-539 together coordinate Mg(2+). Zn(2+) contacts are provided by Cys-876, Cys-953, Cys-960, and Cys-963.

The protein belongs to the RNA polymerase beta' chain family. As to quaternary structure, the RNAP catalytic core consists of 2 alpha, 1 beta, 1 beta' and 1 omega subunit. When a sigma factor is associated with the core the holoenzyme is formed, which can initiate transcription. Requires Mg(2+) as cofactor. Zn(2+) is required as a cofactor.

The catalysed reaction is RNA(n) + a ribonucleoside 5'-triphosphate = RNA(n+1) + diphosphate. Functionally, DNA-dependent RNA polymerase catalyzes the transcription of DNA into RNA using the four ribonucleoside triphosphates as substrates. The chain is DNA-directed RNA polymerase subunit beta' from Saccharopolyspora erythraea (strain ATCC 11635 / DSM 40517 / JCM 4748 / NBRC 13426 / NCIMB 8594 / NRRL 2338).